The following is a 182-amino-acid chain: Crossover junction endodeoxyribonuclease RuvC (182 aa).

Residues Asp7, Glu69, and Asp141 contribute to the active site. Asp7, Glu69, and Asp141 together coordinate Mg(2+).

The protein belongs to the RuvC family. Homodimer which binds Holliday junction (HJ) DNA. The HJ becomes 2-fold symmetrical on binding to RuvC with unstacked arms; it has a different conformation from HJ DNA in complex with RuvA. In the full resolvosome a probable DNA-RuvA(4)-RuvB(12)-RuvC(2) complex forms which resolves the HJ. Mg(2+) serves as cofactor.

The protein localises to the cytoplasm. The catalysed reaction is Endonucleolytic cleavage at a junction such as a reciprocal single-stranded crossover between two homologous DNA duplexes (Holliday junction).. Functionally, the RuvA-RuvB-RuvC complex processes Holliday junction (HJ) DNA during genetic recombination and DNA repair. Endonuclease that resolves HJ intermediates. Cleaves cruciform DNA by making single-stranded nicks across the HJ at symmetrical positions within the homologous arms, yielding a 5'-phosphate and a 3'-hydroxyl group; requires a central core of homology in the junction. The consensus cleavage sequence is 5'-(A/T)TT(C/G)-3'. Cleavage occurs on the 3'-side of the TT dinucleotide at the point of strand exchange. HJ branch migration catalyzed by RuvA-RuvB allows RuvC to scan DNA until it finds its consensus sequence, where it cleaves and resolves the cruciform DNA. In Polaromonas sp. (strain JS666 / ATCC BAA-500), this protein is Crossover junction endodeoxyribonuclease RuvC.